A 722-amino-acid chain; its full sequence is Polyribonucleotide nucleotidyltransferase (722 aa).

Mg(2+)-binding residues include aspartate 495 and aspartate 501. The KH domain maps to 562–621 (PRLLSFRIDPELIGTVIGPGGRTIKGITERTNTKIDIEDGGIVTIASHDGAAAEEAQRII). The S1 motif domain occupies 631-699 (GEIFPGSITR…NRGRINLTLR (69 aa)). Residues 700–722 (GVSQNGGMSNYPEPTPTPVAPLT) are disordered. Over residues 712–722 (EPTPTPVAPLT) the composition is skewed to pro residues.

This sequence belongs to the polyribonucleotide nucleotidyltransferase family. Requires Mg(2+) as cofactor.

The protein resides in the cytoplasm. The catalysed reaction is RNA(n+1) + phosphate = RNA(n) + a ribonucleoside 5'-diphosphate. Involved in mRNA degradation. Catalyzes the phosphorolysis of single-stranded polyribonucleotides processively in the 3'- to 5'-direction. The sequence is that of Polyribonucleotide nucleotidyltransferase from Prochlorococcus marinus (strain NATL2A).